The following is a 127-amino-acid chain: C-C motif chemokine 28 (127 aa).

Residues 1-19 form the signal peptide; sequence MQQRGLAIVALAVCAALHA. 2 cysteine pairs are disulfide-bonded: Cys-30–Cys-58 and Cys-31–Cys-73. The N-linked (GlcNAc...) asparagine glycan is linked to Asn-78. Over residues 92-115 the composition is skewed to basic residues; the sequence is KNGKGNVCHRKKHHGKRNSNRAHQ. The segment at 92–127 is disordered; it reads KNGKGNVCHRKKHHGKRNSNRAHQGKHETYGHKTPY. Residues 116-127 show a composition bias toward basic and acidic residues; it reads GKHETYGHKTPY.

The protein belongs to the intercrine beta (chemokine CC) family. As to expression, preferentially expressed by epithelial cells of diverse tissues including normal and pathological colon, salivary gland, mammary gland, trachea and rectum. Also found in prostate, spleen, thyroid, psoriasis skin and in lower levels in peripheral blood leukocytes, small intestine, Peyer patches, stomach and normal skin.

The protein resides in the secreted. Chemotactic activity for resting CD4, CD8 T-cells and eosinophils. Binds to CCR3 and CCR10 and induces calcium mobilization in a dose-dependent manner. In Homo sapiens (Human), this protein is C-C motif chemokine 28 (CCL28).